We begin with the raw amino-acid sequence, 288 residues long: ATP synthase gamma chain (288 aa).

The protein belongs to the ATPase gamma chain family. In terms of assembly, F-type ATPases have 2 components, CF(1) - the catalytic core - and CF(0) - the membrane proton channel. CF(1) has five subunits: alpha(3), beta(3), gamma(1), delta(1), epsilon(1). CF(0) has three main subunits: a, b and c.

The protein localises to the cell membrane. In terms of biological role, produces ATP from ADP in the presence of a proton gradient across the membrane. The gamma chain is believed to be important in regulating ATPase activity and the flow of protons through the CF(0) complex. The chain is ATP synthase gamma chain from Staphylococcus saprophyticus subsp. saprophyticus (strain ATCC 15305 / DSM 20229 / NCIMB 8711 / NCTC 7292 / S-41).